The following is a 289-amino-acid chain: BTB/POZ domain-containing protein KCTD7 (289 aa).

The tract at residues 1-42 (MVVVTGREPDSRHSDGAMSSSEAEDDFLEPATPTATQAGHGL) is disordered. In terms of domain architecture, BTB spans 53–141 (VPLNIGGAHF…YAIGPLLEQL (89 aa)).

Interacts with CUL3. As to expression, high expression in brain, particularly in post-mitotic neurons. Expressed in the mitral cells of the olfactory bulbs, the hippocampus, the deep layers of the cerebral cortex and Purkinje cells of the cerebellum. Not detected in astrocytes or microglial cells. Also expressed in heart, liver, spleen and kidney.

It localises to the cell membrane. Its subcellular location is the cytoplasm. The protein localises to the cytosol. May be involved in the control of excitability of cortical neurons. In Mus musculus (Mouse), this protein is BTB/POZ domain-containing protein KCTD7 (Kctd7).